The primary structure comprises 531 residues: Plant UBX domain-containing protein 11 (531 aa).

N-acetylmethionine is present on Met1. The segment covering 160 to 173 has biased composition (low complexity); the sequence is AVASPSTASSVQPS. 2 disordered regions span residues 160–316 and 441–531; these read AVAS…KASD and ANAS…NDRR. Polar residues-rich tracts occupy residues 174–190 and 201–214; these read ETKSTVTSASTTENNDG and EPSNLCDTTKNQPA. Residues 290–301 are compositionally biased toward basic and acidic residues; the sequence is VDTKETMKPKDE. One can recognise a UBX domain in the interval 312–390; it reads KKASDVHLNI…RLFDRQALVV (79 aa). Composition is skewed to polar residues over residues 441–478 and 486–496; these read ANASSSVPERQTRPNTEVRNNLGQVGTSFQDPSEGRSN and TSRIGSNIHTL.

As to quaternary structure, interacts with CDC48A.

This is Plant UBX domain-containing protein 11 from Arabidopsis thaliana (Mouse-ear cress).